A 1029-amino-acid chain; its full sequence is Protein phosphatase 1 regulatory subunit 12A (1029 aa).

The KVKF motif signature appears at 35 to 38 (KVKF). 6 ANK repeats span residues 39-68 (DDGA…DINY), 72-101 (DGLT…NINQ), 105-134 (EGWI…HVGA), 138-164 (EGDT…RQGV), 198-227 (SGGT…DVNI), and 231-260 (DGWT…DMET). (3S)-3-hydroxyasparagine; by HIF1AN is present on residues Asn-67 and Asn-100. A (3S)-3-hydroxyasparagine; by HIF1AN modification is found at Asn-226. Residues 290–786 (LHSEKRDKKS…APSSSSLSTL (497 aa)) are disordered. A compositionally biased stretch (basic and acidic residues) spans 291–300 (HSEKRDKKSP). Ser-299 carries the phosphoserine modification. Residues 302–314 (IESTANMENNQPQ) are compositionally biased toward polar residues. Positions 318 to 353 (KNKETLIIEPEKNASRIESLEHEKADEEEEGKKDES) are enriched in basic and acidic residues. Over residues 357–369 (SEEDEEDDSESEA) the composition is skewed to acidic residues. Residues 385–402 (TSSTQAAPAAVTAPTLSS) show a composition bias toward low complexity. A phosphoserine mark is found at Ser-422 and Ser-432. The segment covering 422–432 (SPKEEERKDES) has biased composition (basic and acidic residues). At Thr-443 the chain carries Phosphothreonine. Residue Ser-445 is modified to Phosphoserine; by NUAK1. A Phosphotyrosine modification is found at Tyr-446. The span at 469-480 (RSASSPRLSSSL) shows a compositional bias: low complexity. Ser-472 carries the post-translational modification Phosphoserine; by NUAK1. Position 473 is a phosphoserine; by CDK1 (Ser-473). Residue Ser-477 is modified to Phosphoserine. The segment covering 481–491 (DNKEKEKDNKG) has biased composition (basic and acidic residues). Residues Ser-507 and Ser-509 each carry the phosphoserine modification. Positions 540–551 (NSSINEGSTYHR) are enriched in polar residues. The segment covering 564–578 (SCSVPSTTSTPTVTS) has biased composition (low complexity). A compositionally biased stretch (polar residues) spans 585-594 (SLPSSTSTAA). The span at 596–610 (TPPGSSSAGTQSSTS) shows a compositional bias: low complexity. Phosphoserine is present on residues Ser-601 and Ser-618. Residues 614–625 (WAEDSTEKEKDS) are compositionally biased toward basic and acidic residues. Positions 626 to 656 (APTAVTIPVAPTVVNAAAPSTTTLTTTTAGT) are enriched in low complexity. Over residues 671 to 680 (VRDEESESQR) the composition is skewed to basic and acidic residues. The interaction with ROCK2 stretch occupies residues 680–863 (RKARSRQARQ…VSFWTQDSDE (184 aa)). Basic residues predominate over residues 681–691 (KARSRQARQSR). Phosphoserine; by PKA and PKG; in vitro occurs at positions 690 and 693. A Phosphothreonine; by ROCK1, ROCK2, CDC42BP, ZIPK/DAPK3 and RAF1 modification is found at Thr-694. Residues 716–765 (RTREQENEEKEKEEKEKQDKEKQEEKKESEASREDEYKQKYSRTYDETYT) are compositionally biased toward basic and acidic residues. The span at 771–786 (STSSSSAPSSSSLSTL) shows a compositional bias: low complexity. Ser-801 carries the post-translational modification Phosphoserine. Residues 808 to 927 (AYSRGLAKEN…PYSSRLEKDD (120 aa)) are disordered. Over residues 813-839 (LAKENEREGEKKEEEKEGEDKSQPKSI) the composition is skewed to basic and acidic residues. A compositionally biased stretch (basic residues) spans 840–851 (RERRRPREKRRS). Position 851 is a phosphoserine; by ROCK2 (Ser-851). A phosphoserine mark is found at Ser-861 and Ser-870. The segment covering 866 to 882 (QERQSDTEDGSSKRETQ) has biased composition (basic and acidic residues). Residues 883–897 (TDSVSRYDSSSTSSS) show a composition bias toward low complexity. Phosphoserine occurs at positions 902 and 907. Ser-909 carries the phosphoserine; by NUAK1 modification. Over residues 913-927 (LEDRKPYSSRLEKDD) the composition is skewed to basic and acidic residues. Residue Ser-994 is modified to Phosphoserine.

In terms of assembly, PP1 comprises a catalytic subunit, PPP1CA, PPP1CB or PPP1CC, and one or several targeting or regulatory subunits. PPP1R12A mediates binding to myosin. Interacts with ARHA and CIT. Binds PPP1R12B, ROCK1 and IL16. Interacts directly with PRKG1. Non-covalent dimer of 2 dimers; PRKG1-PRKG1 and PPP1R12A-PPP1R12A. Interacts with SMTNL1. Interacts with PPP1CB; the interaction is direct. Interacts (when phosphorylated at Ser-445, Ser-472 and Ser-910) with 14-3-3. Interacts with ROCK1 and ROCK2. Interacts with isoform 1 and isoform 2 of ZIPK/DAPK3. Interacts with RAF1. Interacts with HIF1AN. Interacts with NCKAP1L. Post-translationally, phosphorylated by CIT (Rho-associated kinase). Phosphorylated cooperatively by ROCK1 and CDC42BP on Thr-694. Phosphorylated on upon DNA damage, probably by ATM or ATR. In vitro, phosphorylation of Ser-693 by PKA and PKG appears to prevent phosphorylation of the inhibitory site Thr-694, probably mediated by PRKG1. Phosphorylation at Ser-445, Ser-472 and Ser-909 by NUAK1 promotes interaction with 14-3-3, leading to inhibit interaction with myosin light chain MLC2, preventing dephosphorylation of MLC2. May be phosphorylated at Thr-694 by DMPK; may inhibit the myosin phosphatase activity. Phosphorylated at Ser-473 by CDK1 during mitosis, creating docking sites for the POLO box domains of PLK1. Subsequently, PLK1 binds and phosphorylates PPP1R12A. Expressed in striated and vascular smooth muscle, specificcally in type 2a fibers (at protein level). Expression levels are 20-30% higher in developed males than females (at protein level).

It is found in the cytoplasm. The protein localises to the cytoskeleton. It localises to the stress fiber. Functionally, key regulator of protein phosphatase 1C (PPP1C). Mediates binding to myosin. As part of the PPP1C complex, involved in dephosphorylation of PLK1. Capable of inhibiting HIF1AN-dependent suppression of HIF1A activity. The protein is Protein phosphatase 1 regulatory subunit 12A of Mus musculus (Mouse).